The primary structure comprises 451 residues: Chromosomal replication initiator protein DnaA (451 aa).

Residues 1–73 (MNAHPKEIWE…IRSLQMVTSQ (73 aa)) are domain I, interacts with DnaA modulators. Residues 73–112 (QKYNVKFLISSELPEEFLTLDTINEQNIKGSIIVSDEMSA) form a domain II region. The tract at residues 113–329 (MLNPKYTFTS…GALIRIVAFS (217 aa)) is domain III, AAA+ region. ATP contacts are provided by G157, G159, K160, and T161. The interval 330-451 (SLTNKEISVD…NDLTKRLDQQ (122 aa)) is domain IV, binds dsDNA.

It belongs to the DnaA family. In terms of assembly, oligomerizes as a right-handed, spiral filament on DNA at oriC.

Its subcellular location is the cytoplasm. Plays an essential role in the initiation and regulation of chromosomal replication. ATP-DnaA binds to the origin of replication (oriC) to initiate formation of the DNA replication initiation complex once per cell cycle. Binds the DnaA box (a 9 base pair repeat at the origin) and separates the double-stranded (ds)DNA. Forms a right-handed helical filament on oriC DNA; dsDNA binds to the exterior of the filament while single-stranded (ss)DNA is stabiized in the filament's interior. The ATP-DnaA-oriC complex binds and stabilizes one strand of the AT-rich DNA unwinding element (DUE), permitting loading of DNA polymerase. After initiation quickly degrades to an ADP-DnaA complex that is not apt for DNA replication. Binds acidic phospholipids. In Clostridium kluyveri (strain NBRC 12016), this protein is Chromosomal replication initiator protein DnaA.